The sequence spans 1299 residues: DNA-directed RNA polymerase subunit beta' (1299 aa).

Zn(2+) is bound by residues Cys60, Cys62, Cys75, and Cys78. Positions 385-405 (GRRGRPVTGPGNRPLKSLSDM) are disordered. Mg(2+) contacts are provided by Asp535, Asp537, and Asp539. The Zn(2+) site is built by Cys886, Cys962, Cys969, and Cys972.

The protein belongs to the RNA polymerase beta' chain family. In terms of assembly, the RNAP catalytic core consists of 2 alpha, 1 beta, 1 beta' and 1 omega subunit. When a sigma factor is associated with the core the holoenzyme is formed, which can initiate transcription. Mg(2+) serves as cofactor. Zn(2+) is required as a cofactor.

It catalyses the reaction RNA(n) + a ribonucleoside 5'-triphosphate = RNA(n+1) + diphosphate. In terms of biological role, DNA-dependent RNA polymerase catalyzes the transcription of DNA into RNA using the four ribonucleoside triphosphates as substrates. This is DNA-directed RNA polymerase subunit beta' from Streptomyces coelicolor (strain ATCC BAA-471 / A3(2) / M145).